Here is a 179-residue protein sequence, read N- to C-terminus: uncharacterized protein (179 aa).

This is an uncharacterized protein from Escherichia coli (strain K12).